Here is a 462-residue protein sequence, read N- to C-terminus: Cysteine--tRNA ligase (462 aa).

Cys28 contacts Zn(2+). The 'HIGH' region motif lies at 30 to 40 (MTVYDYCHIGH). Zn(2+) contacts are provided by Cys209, His234, and Glu238. The 'KMSKS' region signature appears at 266 to 270 (KMSKS). Lys269 is a binding site for ATP.

This sequence belongs to the class-I aminoacyl-tRNA synthetase family. Monomer. Zn(2+) serves as cofactor.

It is found in the cytoplasm. It carries out the reaction tRNA(Cys) + L-cysteine + ATP = L-cysteinyl-tRNA(Cys) + AMP + diphosphate. The sequence is that of Cysteine--tRNA ligase from Pseudomonas fluorescens (strain SBW25).